An 88-amino-acid polypeptide reads, in one-letter code: MKVKPLGDRVLVKPDAVETKTAGGIIIPDTAQEKTQRGVVVAVGDDKEKIKVSVGQKVIHDKYAGTQIQIDGVDHLILKSNDLVAVVE.

It belongs to the GroES chaperonin family. Heptamer of 7 subunits arranged in a ring. Interacts with the chaperonin GroEL.

It localises to the cytoplasm. Its function is as follows. Together with the chaperonin GroEL, plays an essential role in assisting protein folding. The GroEL-GroES system forms a nano-cage that allows encapsulation of the non-native substrate proteins and provides a physical environment optimized to promote and accelerate protein folding. GroES binds to the apical surface of the GroEL ring, thereby capping the opening of the GroEL channel. This Treponema denticola (strain ATCC 35405 / DSM 14222 / CIP 103919 / JCM 8153 / KCTC 15104) protein is Co-chaperonin GroES.